Here is a 345-residue protein sequence, read N- to C-terminus: MNTIYPVIWSNNKVLLIDQTSLPSRYTLVEISRYEDMAKAIKTMIVRGAPAIGVAAAYGMYLGARDIQTQDRETFLKHLDKIAQILRQTRPTAVNLFWAISRMLKTAYETLGTVEEIKKILLETAQKIQEEDLQTCQAIGHNSLSILPTNPEKLTILTHCNAGALATAGYGTALGVIRSVWTAGRLNRVFADETRPRLQGAKLTAWECVQEKIPVTVISDNMAAHCMQKGLIDMVVVGADRIAANGDTANKIGTYGLAVIAKMHQVPFYVAAPLSTVDFSLETGDLIPIEERDPSELYQIGNTVIYPDGVDYYNPAFDVTPADLITGIITEQKTVNPKELITLKG.

Substrate contacts are provided by residues 47 to 49 (RGA), Arg90, and Gln199. Asp240 functions as the Proton donor in the catalytic mechanism. A substrate-binding site is contributed by 250 to 251 (NK).

The protein belongs to the eIF-2B alpha/beta/delta subunits family. MtnA subfamily.

It catalyses the reaction 5-(methylsulfanyl)-alpha-D-ribose 1-phosphate = 5-(methylsulfanyl)-D-ribulose 1-phosphate. The protein operates within amino-acid biosynthesis; L-methionine biosynthesis via salvage pathway; L-methionine from S-methyl-5-thio-alpha-D-ribose 1-phosphate: step 1/6. Its function is as follows. Catalyzes the interconversion of methylthioribose-1-phosphate (MTR-1-P) into methylthioribulose-1-phosphate (MTRu-1-P). In Crocosphaera subtropica (strain ATCC 51142 / BH68) (Cyanothece sp. (strain ATCC 51142)), this protein is Methylthioribose-1-phosphate isomerase.